A 253-amino-acid chain; its full sequence is Mitochondrial inner membrane protease ATP23 (253 aa).

Residues 1–23 (MSKNADLEAIPAAEEIKKPNPPK) form a disordered region. Residues 14–23 (EEIKKPNPPK) are compositionally biased toward basic and acidic residues. Position 152 (histidine 152) interacts with a divalent metal cation. Residue glutamate 153 is part of the active site. Histidine 156 is a binding site for a divalent metal cation.

The protein belongs to the peptidase M76 family.

The protein localises to the mitochondrion inner membrane. Functionally, has a dual role in the assembly of mitochondrial ATPase. Acts as a protease that removes N-terminal residues of mitochondrial ATPase CF(0) subunit 6 at the intermembrane space side. Also involved in the correct assembly of the membrane-embedded ATPase CF(0) particle, probably mediating association of subunit 6 with the subunit 9 ring. The chain is Mitochondrial inner membrane protease ATP23 (ATP23) from Vanderwaltozyma polyspora (strain ATCC 22028 / DSM 70294 / BCRC 21397 / CBS 2163 / NBRC 10782 / NRRL Y-8283 / UCD 57-17) (Kluyveromyces polysporus).